A 230-amino-acid polypeptide reads, in one-letter code: MTTLTARPEAITFDPQQSALIVVDMQNAYATPGGYLDLAGFDVSTTRPVIANIQTAVTAARAAGMLIIWFQNGWDEQYVEAGGPGSPNFHKSNALKTMRNQPQLQGKLLAKGSWDYQLVDELVPQPGDIVLPKPRYSGFFNTPLDSILRSRGIRHLVFTGIATNVCVESTLRDGFFLEYFGVVLEDATHQAGPEFAQKAALFNIETFFGWVSDVETFCDALSPTSFARIA.

Residue Asp-24 is the Proton acceptor of the active site. The active site involves Lys-133. Residue Cys-166 is the Nucleophile of the active site.

This sequence belongs to the isochorismatase family. RutB subfamily.

It carries out the reaction (Z)-3-ureidoacrylate + H2O + H(+) = (Z)-3-aminoacrylate + NH4(+) + CO2. The catalysed reaction is (Z)-3-ureidoacrylate + H2O = (Z)-3-aminoacrylate + carbamate + H(+). It catalyses the reaction (Z)-2-methylureidoacrylate + H2O + H(+) = (Z)-2-methylaminoacrylate + NH4(+) + CO2. Functionally, hydrolyzes ureidoacrylate to form aminoacrylate and carbamate. The carbamate hydrolyzes spontaneously, thereby releasing one of the nitrogen atoms of the pyrimidine ring as ammonia and one of its carbon atoms as CO2. This is Ureidoacrylate amidohydrolase RutB from Escherichia coli O103:H2 (strain 12009 / EHEC).